Consider the following 464-residue polypeptide: Argininosuccinate lyase (464 aa).

Belongs to the lyase 1 family. Argininosuccinate lyase subfamily.

It localises to the cytoplasm. The catalysed reaction is 2-(N(omega)-L-arginino)succinate = fumarate + L-arginine. The protein operates within amino-acid biosynthesis; L-arginine biosynthesis; L-arginine from L-ornithine and carbamoyl phosphate: step 3/3. This is Argininosuccinate lyase from Pseudomonas aeruginosa (strain ATCC 15692 / DSM 22644 / CIP 104116 / JCM 14847 / LMG 12228 / 1C / PRS 101 / PAO1).